Reading from the N-terminus, the 333-residue chain is Ferrochelatase (333 aa).

His202 and Glu284 together coordinate Fe cation.

This sequence belongs to the ferrochelatase family.

The protein localises to the cytoplasm. It carries out the reaction heme b + 2 H(+) = protoporphyrin IX + Fe(2+). It participates in porphyrin-containing compound metabolism; protoheme biosynthesis; protoheme from protoporphyrin-IX: step 1/1. Functionally, catalyzes the ferrous insertion into protoporphyrin IX. This Francisella tularensis subsp. tularensis (strain FSC 198) protein is Ferrochelatase.